A 381-amino-acid polypeptide reads, in one-letter code: Chorismate synthase (381 aa).

The NADP(+) site is built by R41 and R47. FMN contacts are provided by residues 127–129 (RAS), 247–248 (QA), G291, 306–310 (KPIPT), and R332.

The protein belongs to the chorismate synthase family. Homotetramer. The cofactor is FMNH2.

The enzyme catalyses 5-O-(1-carboxyvinyl)-3-phosphoshikimate = chorismate + phosphate. It participates in metabolic intermediate biosynthesis; chorismate biosynthesis; chorismate from D-erythrose 4-phosphate and phosphoenolpyruvate: step 7/7. Functionally, catalyzes the anti-1,4-elimination of the C-3 phosphate and the C-6 proR hydrogen from 5-enolpyruvylshikimate-3-phosphate (EPSP) to yield chorismate, which is the branch point compound that serves as the starting substrate for the three terminal pathways of aromatic amino acid biosynthesis. This reaction introduces a second double bond into the aromatic ring system. This is Chorismate synthase from Anaeromyxobacter dehalogenans (strain 2CP-C).